Here is a 656-residue protein sequence, read N- to C-terminus: Protein teflon (656 aa).

The segment at 33 to 56 (LYCHFCRDLFTQLPEFLRHLQSNH) adopts a C2H2-type 1 zinc-finger fold. The interval 80–131 (DKAHEDAQSAGHNSSSGDSRSLMNSEDSRAIDGSEENSDNSPVKPEQIGKQN) is disordered. A compositionally biased stretch (polar residues) spans 89–104 (AGHNSSSGDSRSLMNS). C2H2-type zinc fingers lie at residues 606–628 (YFCK…LISH) and 632–655 (FQCT…RNAH).

It belongs to the Teflon family.

Its subcellular location is the nucleus. The protein resides in the chromosome. Specifically required in males for proper segregation of autosomal bivalents at meiosis I. Expression is required in the male germ line prior to spermatocyte stage S4. May have a role as a bridging molecule maintaining adhesion to hold autosome bivalents together via heterochromatic connections. The chain is Protein teflon from Drosophila sechellia (Fruit fly).